The primary structure comprises 207 residues: Large ribosomal subunit protein uL4 (207 aa).

This sequence belongs to the universal ribosomal protein uL4 family. As to quaternary structure, part of the 50S ribosomal subunit.

In terms of biological role, one of the primary rRNA binding proteins, this protein initially binds near the 5'-end of the 23S rRNA. It is important during the early stages of 50S assembly. It makes multiple contacts with different domains of the 23S rRNA in the assembled 50S subunit and ribosome. Its function is as follows. Forms part of the polypeptide exit tunnel. In Rickettsia rickettsii (strain Iowa), this protein is Large ribosomal subunit protein uL4.